Consider the following 230-residue polypeptide: uncharacterized protein (230 aa).

Transmembrane regions (helical) follow at residues 4-24, 30-50, 67-87, 91-111, 148-168, and 210-230; these read ACIA…MVKL, LPFL…LMMF, LLGP…HIIV, VPIL…GLIF, MTVV…PLFL, and MTLC…LFHI.

It belongs to the YohK (E.coli)/YwbG (IPA-22R) (B.subtilis) family.

It is found in the cell membrane. This is an uncharacterized protein from Bacillus subtilis (strain 168).